A 444-amino-acid polypeptide reads, in one-letter code: Histidinol dehydrogenase (444 aa).

Positions 135, 199, and 227 each coordinate NAD(+). The substrate site is built by T250, Q272, and H275. Zn(2+)-binding residues include Q272 and H275. Active-site proton acceptor residues include E341 and H342. Positions 342, 375, 429, and 434 each coordinate substrate. Residue D375 coordinates Zn(2+). Position 434 (H434) interacts with Zn(2+).

The protein belongs to the histidinol dehydrogenase family. It depends on Zn(2+) as a cofactor.

It catalyses the reaction L-histidinol + 2 NAD(+) + H2O = L-histidine + 2 NADH + 3 H(+). Its pathway is amino-acid biosynthesis; L-histidine biosynthesis; L-histidine from 5-phospho-alpha-D-ribose 1-diphosphate: step 9/9. Its function is as follows. Catalyzes the sequential NAD-dependent oxidations of L-histidinol to L-histidinaldehyde and then to L-histidine. The sequence is that of Histidinol dehydrogenase (hisD) from Mycobacterium bovis (strain ATCC BAA-935 / AF2122/97).